The following is a 123-amino-acid chain: Small ribosomal subunit protein uS12 (123 aa).

Asp-89 carries the post-translational modification 3-methylthioaspartic acid. A disordered region spans residues 102 to 123 (LDTSGVQDRRQRRSKYGAKRPK). Residues 111-123 (RQRRSKYGAKRPK) are compositionally biased toward basic residues.

The protein belongs to the universal ribosomal protein uS12 family. Part of the 30S ribosomal subunit. Contacts proteins S8 and S17. May interact with IF1 in the 30S initiation complex.

In terms of biological role, with S4 and S5 plays an important role in translational accuracy. Interacts with and stabilizes bases of the 16S rRNA that are involved in tRNA selection in the A site and with the mRNA backbone. Located at the interface of the 30S and 50S subunits, it traverses the body of the 30S subunit contacting proteins on the other side and probably holding the rRNA structure together. The combined cluster of proteins S8, S12 and S17 appears to hold together the shoulder and platform of the 30S subunit. In Lawsonia intracellularis (strain PHE/MN1-00), this protein is Small ribosomal subunit protein uS12.